Reading from the N-terminus, the 245-residue chain is 1-(5-phosphoribosyl)-5-[(5-phosphoribosylamino)methylideneamino] imidazole-4-carboxamide isomerase (245 aa).

The Proton acceptor role is filled by aspartate 8. Residue aspartate 130 is the Proton donor of the active site.

It belongs to the HisA/HisF family.

The protein localises to the cytoplasm. The catalysed reaction is 1-(5-phospho-beta-D-ribosyl)-5-[(5-phospho-beta-D-ribosylamino)methylideneamino]imidazole-4-carboxamide = 5-[(5-phospho-1-deoxy-D-ribulos-1-ylimino)methylamino]-1-(5-phospho-beta-D-ribosyl)imidazole-4-carboxamide. It participates in amino-acid biosynthesis; L-histidine biosynthesis; L-histidine from 5-phospho-alpha-D-ribose 1-diphosphate: step 4/9. This chain is 1-(5-phosphoribosyl)-5-[(5-phosphoribosylamino)methylideneamino] imidazole-4-carboxamide isomerase, found in Pseudomonas aeruginosa (strain LESB58).